The sequence spans 647 residues: 2',3'-cyclic-nucleotide 2'-phosphodiesterase/3'-nucleotidase (647 aa).

The signal sequence occupies residues 1 to 19 (MIKFSATLLATLIAASVNA). A divalent metal cation is bound by residues Asp-31, His-33, Asp-76, Asn-116, His-225, His-257, and His-259. Substrate contacts are provided by residues Tyr-440 and 544 to 550 (YRAYGGK).

It belongs to the 5'-nucleotidase family. The cofactor is a divalent metal cation.

It is found in the periplasm. It carries out the reaction a nucleoside 2',3'-cyclic phosphate + H2O = a nucleoside 3'-phosphate + H(+). The catalysed reaction is a ribonucleoside 3'-phosphate + H2O = a ribonucleoside + phosphate. This bifunctional enzyme catalyzes two consecutive reactions during ribonucleic acid degradation. Converts a 2',3'-cyclic nucleotide to a 3'-nucleotide and then the 3'-nucleotide to the corresponding nucleoside and phosphate. In Salmonella typhimurium (strain LT2 / SGSC1412 / ATCC 700720), this protein is 2',3'-cyclic-nucleotide 2'-phosphodiesterase/3'-nucleotidase (cpdB).